Reading from the N-terminus, the 1938-residue chain is MSLEHEKDPGWQYLKRSREQQLADQSRPYDSKKNVWIPDAEEGYIEGVIKGPGPKADTVIVTAGGKDVTLKKDIVQEVNPPKFEKTEDMSNLTFLNDASVLWNLRSRYAAMLIYTYSGLFCVVINPYKRLPIYTDSVARMFMGKRRTEMPPHLFAVSDQAYRYMLQDHENQSMLITGESGAGKTENTKKVICYFATVGASQKAALKEGEKEVTLEDQIVQTNPVLEAFGNAKTVRNNNSSRFGKFIRIHFNKHGTLASCDIEHYLLEKSRVIRQAPGERCYHIFYQIYSDFKPQLRDELLLNHPISNYWFVAQAELLIDGIDDTEEFQLTDEAFDVLKFSPTEKMDCYRLMSAHMHMGNMKFKQRPREEQAEPDGQDEAERACNMYGIDVDQFLKALVSPRVKVGTEWVSKGQNVDQVHWAIGAMAKGLYARVFHWLVKKCNLTLDQKGIDRDYFIGVLDIAGFEIFDFNSFEQLWINFVNEKLQQFFNHHMFVLEQEEYAREGIQWTFIDFGLDLQACIELIEKPLGIISMLDEECIVPKATDMTLAQKLTDQHLGKHPNFEKPKPPKGKQGEAHFAMRHYAGTVRYNVLNWLEKNKDPLNDTVVSVMKASKKNDLLVEIWQDYTTQEEAAAAAKAGGGRKGGKSGSFMTVSMMYRESLNKLMTMLHKTHPHFIRCIIPNEKKQSGMIDAALVLNQLTCNGVLEGIRICRKGFPNRTQHPDFVQRYAILAAKEAKSSDDMKTCAGAILQALINQKQLNDEQFRIGHTKVFFKAGVVAHIEDLRDDKLNQIITGFQSAIRWYTATADAGARRKQLNSYIILQRNIRSWCVLRTWDWFLLFGKLRPQLKCGKMAEEMIKMAEEQKVLEAEAKKAESARKSQEEAYAKLSAERSKLLEALELTQGGSAAIEEKLTRLNSARQEVEKSLNDANDRLSEHEEKNADLEKQRRKAQQEVENLKKSIEAVDGNLAKSLEEKAAKENQIHSLQDEMNSQDETIGKINKEKKLLEENNRQLVDDLQAEEAKQAQANRLRGKLEQTLDEMEEAVEREKRIRAETEKSKRKVEGELKGAQETIDELSAIKLETDASLKKKEADIHALGVRIEDEQALANRLTRQSKENAQRIIEIEDELEHERQSRSKADRARAELQRELDELNERLDEQNKQLEIQQDNNKKKDSEIIKFRRDLDEKNMANEDQMAMIRRKNNDQISALTNTLDALQKSKAKIEKEKGVLQKELDDINAQVDQETKSRVEQERLAKQYEIQVAELQQKVDEQSRQIGEYTSTKGRLSNDNSDLARQVEELEIHLATINRAKTAFSSQLVEAKKAAEDELHERQEFHAACKNLEHELDQCHELLEEQINGKDDIQRQLSRINSEISQWKARYEGEGLVGSEELEELKRKQMNRVMDLQEALSAAQNKVISLEKAKGKLLAETEDARSDVDRHLTVIASLEKKQRAFDKIVDDWKRKVDDIQKEIDATTRDSRNTSTEVFKLRSSMDNLSEQIETLRRENKIFSQEIRDINEQITQGGRTYQEVHKSVRRLEQEKDELQHALDEAEAALEAEESKVLRLQIEVQQIRSEIEKRIQEKEEEFENTRKNHQRALESIQASLETEAKSKAELARAKKKLETDINQLEIALDHANKANVDAQKNLKKLFDQVKELQGQVDDEQRRREEIRENYLAAEKRLAIALSESEDLAHRIEASDKHKKQLEIEQAELKSSNTELIGNNAALSAMKRKVENEVQIARNELDEYLNELKASEERARKAAADADRLAEEVRQEQEHAVHVDRQRKSLELNAKELQAKIDDAERAMIQFGAKALAKVEDRVRSLEAELHSEQRRHQESIKGYTKQERRARELQFQVEEDKKAFDRLQENVEKLQQKIRVQKRQIEEAEEVATQNLSKFRQIQLALENAEERAEVAENSLVRMRGQVVRSATNK.

The interval 1-27 is disordered; it reads MSLEHEKDPGWQYLKRSREQQLADQSR. The segment covering 16–27 has biased composition (basic and acidic residues); sequence RSREQQLADQSR. Residues 30–80 enclose the Myosin N-terminal SH3-like domain; that stretch reads DSKKNVWIPDAEEGYIEGVIKGPGPKADTVIVTAGGKDVTLKKDIVQEVNP. A Myosin motor domain is found at 84-785; it reads EKTEDMSNLT…VVAHIEDLRD (702 aa). Lysine 128 is subject to N6,N6,N6-trimethyllysine. 177 to 184 lines the ATP pocket; that stretch reads GESGAGKT. 2 actin-binding regions span residues 660-682 and 764-778; these read LNKL…IPNE and RIGH…GVVA. The alpha-helical tailpiece (short S2) stretch occupies residues 846–1170; the sequence is QLKCGKMAEE…NKQLEIQQDN (325 aa). The segment at 846 to 1938 is rodlike tail (S2 and LMM domains); the sequence is QLKCGKMAEE…GQVVRSATNK (1093 aa). Residues 846–1938 adopt a coiled-coil conformation; it reads QLKCGKMAEE…GQVVRSATNK (1093 aa). Residues 919-951 are disordered; sequence RQEVEKSLNDANDRLSEHEEKNADLEKQRRKAQ. Positions 920 to 951 are enriched in basic and acidic residues; the sequence is QEVEKSLNDANDRLSEHEEKNADLEKQRRKAQ. Positions 1171–1938 are light meromyosin (LMM); sequence NKKKDSEIIK…GQVVRSATNK (768 aa).

The protein belongs to the TRAFAC class myosin-kinesin ATPase superfamily. Myosin family. In terms of assembly, muscle myosin is a hexameric protein that consists of 2 heavy chain subunits (MHC), 2 alkali light chain subunits (MLC) and 2 regulatory light chain subunits (MLC-2). Interacts with itr-1 (via c-terminal coiled coil domain). As to expression, found exclusively in the pharyngeal muscle.

It localises to the cytoplasm. The protein resides in the myofibril. Its function is as follows. Muscle contraction. This chain is Myosin-1, found in Caenorhabditis elegans.